The following is a 116-amino-acid chain: Spexin (116 aa).

An N-terminal signal peptide occupies residues 1-26 (MKGFKSLVVMTLTLFLVFSFMGNCNS). Positions 27 to 35 (APQRLFERR) are excised as a propeptide. Glutamine 49 is subject to Glutamine amide. Propeptides lie at residues 50–116 (GRRF…LLNW) and 74–116 (PNSQ…LLNW). Positions 53–73 (FLSDQSRRKDLSDRPPLERRS) are enriched in basic and acidic residues. The tract at residues 53–80 (FLSDQSRRKDLSDRPPLERRSPNSQQLT) is disordered.

This sequence belongs to the spexin family.

The protein localises to the secreted. It is found in the extracellular space. Its subcellular location is the cytoplasmic vesicle. The protein resides in the secretory vesicle. In terms of biological role, plays a role as a central modulator of cardiovascular and renal function and nociception. Also plays a role in energy metabolism and storage. Inhibits adrenocortical cell proliferation with minor stimulation on corticosteroid release. Acts as a ligand for galanin receptors GALR2 and GALR3. Intracerebroventricular administration of the peptide induces an increase in arterial blood pressure, a decrease in both heart rate and renal excretion and delayed natriuresis. Intraventricular administration of the peptide induces antinociceptive activity. Also induces contraction of muscarinic-like stomach smooth muscles. Intraperitoneal administration of the peptide induces a reduction in food consumption and body weight. Inhibits long chain fatty acid uptake into adipocytes. Functionally, intracerebroventricular administration of the peptide induces a decrease in heart rate, but no change in arterial pressure, and an increase in urine flow rate. Intraventricular administration of the peptide induces antinociceptive activity. The chain is Spexin (SPX) from Bos taurus (Bovine).